A 90-amino-acid polypeptide reads, in one-letter code: Major envelope protein (90 aa).

The chain crosses the membrane as a helical span at residues 53 to 70 (AVSVVSWAVAAGLIGELI).

It is found in the virion membrane. Its function is as follows. Essential for membrane formation. This Pseudomonas savastanoi pv. phaseolicola (Pseudomonas syringae pv. phaseolicola) protein is Major envelope protein (P9).